Here is a 445-residue protein sequence, read N- to C-terminus: C4-dicarboxylate transport protein (445 aa).

The next 8 membrane-spanning stretches (helical) occupy residues 24 to 44, 62 to 82, 105 to 125, 163 to 183, 201 to 221, 237 to 257, 322 to 342, and 370 to 390; these read VLYV…WVSP, LIKM…IAHI, FALI…GLAA, GDIL…MALG, FGVI…AMAF, LVAL…GLIA, IYMT…LTFT, and AGTL…VFSI.

The protein belongs to the dicarboxylate/amino acid:cation symporter (DAACS) (TC 2.A.23) family.

It localises to the cell inner membrane. Functionally, responsible for the transport of dicarboxylates such as succinate, fumarate, and malate from the periplasm across the membrane. In Rhodopseudomonas palustris (strain BisB5), this protein is C4-dicarboxylate transport protein.